Here is a 114-residue protein sequence, read N- to C-terminus: Putative neurotoxin 7 (114 aa).

It belongs to the scolopendra neurotoxin 8 family. In terms of processing, contains 3 disulfide bonds. Expressed by the venom gland.

It is found in the secreted. The protein is Putative neurotoxin 7 of Scolopendra mutilans (Chinese red-headed centipede).